The primary structure comprises 2792 residues: E3 ubiquitin-protein ligase UBR5 (2792 aa).

Thr2 carries the N-acetylthreonine modification. Basic and acidic residues predominate over residues 77-88; that stretch reads DRLELGKPDNND. Residues 77-175 form a disordered region; sequence DRLELGKPDN…DRGSGLLGSQ (99 aa). Residues 94–111 show a composition bias toward low complexity; sequence SSSGTGRTSRPGRTSDSP. Ser110 is subject to Phosphoserine. Positions 135–144 are enriched in gly residues; the sequence is GVGGSGGGSS. The 43-residue stretch at 184-226 folds into the UBA domain; the sequence is VIPEELISQAQVVLQGKSRSVIIRELQRTNLDVNLAVNNLLSR. At Ser321 the chain carries Phosphoserine. The span at 322 to 341 shows a compositional bias: basic and acidic residues; it reads FDNERGSTSKEGESNPDKKN. The interval 322 to 347 is disordered; it reads FDNERGSTSKEGESNPDKKNTPVQSP. Phosphoserine occurs at positions 346 and 572. Residues 577–598 show a composition bias toward basic and acidic residues; the sequence is KSMEKASKTLETKPESKQEPVK. The tract at residues 577 to 642 is disordered; that stretch reads KSMEKASKTL…APREEEKVNE (66 aa). A Phosphoserine modification is found at Ser606. A compositionally biased stretch (low complexity) spans 608 to 622; the sequence is ASTCSDASSIASSAS. The residue at position 631 (Thr631) is a Phosphothreonine. Residues Ser802, Ser922, and Ser1012 each carry the phosphoserine modification. Disordered regions lie at residues 993–1029 and 1046–1069; these read AGLGRHEAGASSSDHQDPVSPPIAPPSWVPDPPSMDP and TAATGSGQGPSTSTIPGPSTEPSV. Positions 1011-1027 are enriched in pro residues; sequence VSPPIAPPSWVPDPPSM. Residues 1046-1067 show a composition bias toward polar residues; the sequence is TAATGSGQGPSTSTIPGPSTEP. 2 positions are modified to phosphothreonine: Thr1109 and Thr1129. The UBR-type zinc-finger motif lies at 1171–1239; sequence DTCSFTWTGA…EKCKCKTLIA (69 aa). A phosphoserine mark is found at Ser1221, Ser1302, Ser1349, Ser1369, and Ser1475. A disordered region spans residues 1293 to 1312; that stretch reads REDRNRKTASPEDSDMPDHD. Residues 1509–1734 form a disordered region; sequence SVEPLPPRPS…PSSTSTPAAS (226 aa). The segment covering 1518–1531 has biased composition (low complexity); that stretch reads SSDQASSSSQSQSS. Over residues 1532-1547 the composition is skewed to polar residues; sequence YIIRNPQQRRISQSQP. Ser1543 is subject to Phosphoserine. 2 stretches are compositionally biased toward acidic residues: residues 1553-1568 and 1599-1608; these read EEQDDIVSADVEEVEV and HDEDGSDMEL. Polar residues predominate over residues 1623–1632; sequence NHSNQDNASG. 3 stretches are compositionally biased toward low complexity: residues 1635 to 1651, 1662 to 1675, and 1720 to 1734; these read SVVTAATAGSEAGASSV, SNDSSDSDSSSSQS, and AASTAPSSTSTPAAS. Position 1730 is a phosphothreonine (Thr1730). Ser1735 is modified (phosphoserine). Phosphotyrosine is present on Tyr1740. The residue at position 1774 (Ser1774) is a Phosphoserine. A disordered region spans residues 1853–1884; the sequence is LASAGDPGHPNHPLHASQNSARRERMTAREEA. Positions 1873–1884 are enriched in basic and acidic residues; the sequence is ARRERMTAREEA. A Phosphothreonine modification is found at Thr1963. Residues 1978-2015 are disordered; the sequence is GIDNEDSEHENDDDTSQSATLNDKDDDSLPAETGQNHP. The span at 1979–1992 shows a compositional bias: acidic residues; sequence IDNEDSEHENDDDT. Phosphoserine is present on residues Ser1984, Ser2020, and Ser2022. Thr2024 carries the post-translational modification Phosphothreonine. Ser2070 is modified (phosphoserine). Residues 2111-2137 form a disordered region; sequence RQKKEGEEQSLLAEEADSSKPGPSAPD. A Phosphothreonine modification is found at Thr2207. Residues Ser2235 and Ser2283 each carry the phosphoserine modification. The segment at 2317–2387 is disordered; sequence HTSLMQRLRN…SDDPDPLPAH (71 aa). 2 stretches are compositionally biased toward basic and acidic residues: residues 2326-2342 and 2350-2362; these read NRGERDREREREREMRR and SRRDRDRDFRRQL. Residues 2371–2448 enclose the PABC domain; that stretch reads PASEGNPSDD…AMELIIAHGR (78 aa). An HECT domain is found at 2455-2792; that stretch reads ILDLGLLDSS…AIKTKNFGFV (338 aa). 3 positions are modified to phosphoserine: Ser2463, Ser2477, and Ser2479. Residues 2467–2494 form a disordered region; sequence VQENRKRHGSSRSVVDMDLEDTDDGDDN. The span at 2483–2493 shows a compositional bias: acidic residues; the sequence is MDLEDTDDGDD. The Glycyl thioester intermediate role is filled by Cys2761.

This sequence belongs to the UBR5 family. Homotetramer; composed of a dimer of dimers. Associates with CDK9 and TFIIS/TCEA1 and forms a transcription regulatory complex made of CDK9, RNAP II, UBR5 and TFIIS/TCEA1 that can stimulate target gene transcription (e.g. gamma fibrinogen/FGG) by recruiting their promoters. Associates with the E3 ligase complex containing DYRK2, EDD/UBR5, DDB1 and DCAF1 proteins (EDVP complex). Binds TOPBP1. Interacts with PIH1D1. Interacts with CIB1.

It localises to the nucleus. The protein localises to the cytoplasm. The catalysed reaction is S-ubiquitinyl-[E2 ubiquitin-conjugating enzyme]-L-cysteine + [acceptor protein]-L-lysine = [E2 ubiquitin-conjugating enzyme]-L-cysteine + N(6)-ubiquitinyl-[acceptor protein]-L-lysine.. It participates in protein modification; protein ubiquitination. Its function is as follows. E3 ubiquitin-protein ligase involved in different protein quality control pathways in the cytoplasm and nucleus. Mainly acts as a ubiquitin chain elongator that extends pre-ubiquitinated substrates. Component of the N-end rule pathway: ubiquitinates proteins bearing specific N-terminal residues that are destabilizing according to the N-end rule, leading to their degradation. Recognizes type-1 N-degrons, containing positively charged amino acids (Arg, Lys and His). Together with UBR4, part of a cytoplasm protein quality control pathway that prevents protein aggregation by catalyzing assembly of heterotypic 'Lys-11'-/'Lys-48'-linked branched ubiquitin chains on aggregated proteins, leading to substrate recognition by the segregase p97/VCP and degradation by the proteasome: UBR5 is probably branching multiple 'Lys-48'-linked chains of substrates initially modified with mixed conjugates by UBR4. Together with ITCH, catalyzes 'Lys-48'-/'Lys-63'-branched ubiquitination of TXNIP, leading to its degradation: UBR5 mediates branching of 'Lys-48'-linked chains of substrates initially modified with 'Lys-63'-linked conjugates by ITCH. Catalytic component of a nuclear protein quality control pathway that mediates ubiquitination and degradation of unpaired transcription factors (i.e. transcription factors that are not assembled into functional multiprotein complexes): specifically recognizes and binds degrons that are not accessible when transcription regulators are associated with their coactivators. Ubiquitinates various unpaired transcription regulator (MYC, SUPT4H1, SUPT5H, CDC20 and MCRS1), as well as ligand-bound nuclear receptors (ESR1, NR1H3, NR3C1, PGR, RARA, RXRA AND VDR) that are not associated with their nuclear receptor coactivators (NCOAs). Involved in maturation and/or transcriptional regulation of mRNA by mediating polyubiquitination and activation of CDK9. Also acts as a regulator of DNA damage response by acting as a suppressor of RNF168, an E3 ubiquitin-protein ligase that promotes accumulation of 'Lys-63'-linked histone H2A and H2AX at DNA damage sites, thereby acting as a guard against excessive spreading of ubiquitinated chromatin at damaged chromosomes. Regulates DNA topoisomerase II binding protein (TopBP1) in the DNA damage response. Ubiquitinates acetylated PCK1. Acts as a positive regulator of the canonical Wnt signaling pathway by mediating (1) ubiquitination and stabilization of CTNNB1, and (2) 'Lys-48'-linked ubiquitination and degradation of TLE3. Promotes disassembly of the mitotic checkpoint complex (MCC) from the APC/C complex by catalyzing ubiquitination of BUB1B, BUB3 and CDC20. Plays an essential role in extraembryonic development. Required for the maintenance of skeletal tissue homeostasis by acting as an inhibitor of hedgehog (HH) signaling. The sequence is that of E3 ubiquitin-protein ligase UBR5 from Mus musculus (Mouse).